The following is an 89-amino-acid chain: Large ribosomal subunit protein bL27 (89 aa).

The disordered stretch occupies residues 1–26 (MATKKAGGSSKNGRDSAGRRLGLKKS).

It belongs to the bacterial ribosomal protein bL27 family.

This is Large ribosomal subunit protein bL27 from Orientia tsutsugamushi (strain Ikeda) (Rickettsia tsutsugamushi).